Reading from the N-terminus, the 507-residue chain is WD-40 repeat-containing protein MSI4 (507 aa).

An N-acetylmethionine modification is found at Met-1. Residues 1–66 (MESDEAAAVS…KTQQSPSVDE (66 aa)) form a disordered region. WD repeat units follow at residues 95–137 (RWGP…KPRV), 162–202 (IHPG…NRHA), and 217–257 (GHQD…TTIG). Over residues 258–272 (TDSKSSGSIIKQTGE) the composition is skewed to polar residues. Positions 258–282 (TDSKSSGSIIKQTGEGTDKNESPTV) are disordered. WD repeat units follow at residues 290–330 (GHED…NPVT), 335–375 (AHDA…ANGV), 384–424 (GHKA…KKSD), and 439–486 (GHRD…YRPE). The short motif at 308–323 (FCSVGDDSCLILWDAR) is the DWD box element.

This sequence belongs to the WD repeat RBAP46/RBAP48/MSI1 family. Interacts with AHL16 and HOS1. Interacts with LHP1, PDP1, PDP2 and PDP3. Component of the PRC2 (polycomb repressive complex 2) complex which regulates histone methylation on histone H3K27. As to expression, expressed in rosette leaves, cauline leaves, main stems and developing fruits. Expressed at higher levels in roots and flowers.

The protein resides in the nucleus. In terms of biological role, core histone-binding subunit that may target chromatin assembly factors, chromatin remodeling factors and histone deacetylases to their histone substrates in a manner that is regulated by nucleosomal DNA. Component of the flowering autonomous pathway which positively regulates flowering by promoting transcriptional repression of the flowering repressor FLC. May promote histone deacetylation at the FLC locus leading to the formation of repressive chromatin structures. Forms a histone deacetylase complex with HDA5, HDA6 and FLD that represses FLC gene expression to control flowering time. Also negatively regulates cold-responsive genes. Acts together with PDP1 and MSI5 to regulate the function of the PRC2 complex on FLC. Required for systemic acquired resistance (SAR) toward pathogenic bacteria (e.g. Pseudomonas syringae pv tomato DC3000 (avrPto)). Together with FLD and MSI4/FVE, contributes to dehydroabietinal-dependent (DA, a diterpenoid tricyclic diterpene) activation of flowering ans SAR. This Arabidopsis thaliana (Mouse-ear cress) protein is WD-40 repeat-containing protein MSI4.